The primary structure comprises 430 residues: Tapasin (430 aa).

The first 15 residues, 1–15 (MAAGLRLLLAGLCWS), serve as a signal peptide directing secretion. Topologically, residues 16-399 (QFRVEDAASP…TEGPHLEDIT (384 aa)) are lumenal. A disulfide bond links Cys-34 and Cys-99. Positions 61-128 (GDAETPPEPG…PDARSPPTAG (68 aa)) are disordered. Asn-78 carries N-linked (GlcNAc...) asparagine glycosylation. A compositionally biased stretch (polar residues) spans 101–111 (LNPTNPQTGSD). Ig-like C1-type domains follow at residues 139–273 (PQYG…LQLH) and 278–382 (PKVT…MRVS). A disulfide bridge connects residues Cys-299 and Cys-368. Positions 316 to 342 (RAGGSGTSQSPRDTVMDSWTSGHRQAA) are disordered. The segment covering 322–338 (TSQSPRDTVMDSWTSGH) has biased composition (polar residues). Residues 400–417 (GLFLVAFVLCGLIRWLYP) traverse the membrane as a helical segment. The Cytoplasmic segment spans residues 418–430 (KAARPKEETKKSQ).

In terms of assembly, interacts with TAP1 and is thus a subunit of the TAP complex. Interaction with TAP1 is TAP2 independent and is required for efficient peptide-TAP interaction. Obligatory mediator for the interaction between newly assembled MHC class I molecules, calreticulin, ERp57 and TAP. Up to 4 MHC class I/tapasin complexes bind to 1 TAP.

It is found in the endoplasmic reticulum membrane. Functionally, involved in the association of MHC class I with transporter associated with antigen processing (TAP) and in the assembly of MHC class I with peptide (peptide loading). This chain is Tapasin (TAPBP), found in Gallus gallus (Chicken).